A 197-amino-acid polypeptide reads, in one-letter code: Large ribosomal subunit protein uL13B (197 aa).

Ser193 is subject to Phosphoserine.

It belongs to the universal ribosomal protein uL13 family. As to quaternary structure, component of the large ribosomal subunit (LSU). Mature yeast ribosomes consist of a small (40S) and a large (60S) subunit. The 40S small subunit contains 1 molecule of ribosomal RNA (18S rRNA) and at least 33 different proteins. The large 60S subunit contains 3 rRNA molecules (25S, 5.8S and 5S rRNA) and at least 46 different proteins.

It is found in the cytoplasm. Functionally, component of the ribosome, a large ribonucleoprotein complex responsible for the synthesis of proteins in the cell. The small ribosomal subunit (SSU) binds messenger RNAs (mRNAs) and translates the encoded message by selecting cognate aminoacyl-transfer RNA (tRNA) molecules. The large subunit (LSU) contains the ribosomal catalytic site termed the peptidyl transferase center (PTC), which catalyzes the formation of peptide bonds, thereby polymerizing the amino acids delivered by tRNAs into a polypeptide chain. The nascent polypeptides leave the ribosome through a tunnel in the LSU and interact with protein factors that function in enzymatic processing, targeting, and the membrane insertion of nascent chains at the exit of the ribosomal tunnel. The polypeptide is Large ribosomal subunit protein uL13B (rpl1601) (Schizosaccharomyces pombe (strain 972 / ATCC 24843) (Fission yeast)).